A 1201-amino-acid polypeptide reads, in one-letter code: Stress response protein nst1 (1201 aa).

7 disordered regions span residues 1-178, 268-341, 429-478, 535-707, 724-848, 899-952, and 1150-1169; these read MSDP…PHTL, NQGS…YEDE, QSLH…GDAV, EEQT…PASL, IATP…PLMN, QPSG…QRDV, and EPDTNSASSGHRGSIVPGEI. The span at 40–50 shows a compositional bias: basic residues; it reads NRKKQKRRQKQ. Basic and acidic residues predominate over residues 84-114; that stretch reads VSDDHDLDERANGETYYEEIHDATHDLDDHP. The segment covering 116–128 has biased composition (polar residues); it reads NLSNGQPGQQNAT. Basic residues predominate over residues 130–141; sequence RKSKKKKGKKNR. 2 stretches are compositionally biased toward polar residues: residues 145–164 and 293–302; these read QTMGDESSTPLSTPSVSMSQ and GQHTRTQGQF. Acidic residues-rich tracts occupy residues 313 to 341 and 441 to 466; these read PEDDEDLEEDYDEDDEDDEPYSDDEYEDE and DDDDYDEEEDEDYDSQEDEDYEEDEM. Residues 520 to 673 are a coiled coil; sequence KVAEQRQQKL…KTKDERERKL (154 aa). Composition is skewed to basic and acidic residues over residues 535–553 and 563–692; these read EEQTRNEQRNAKKAREAQK and QAKE…DPQA. Positions 740-767 are enriched in polar residues; it reads QPSQQGSHTSSPRSQPASTEPSQVSISP. Low complexity-rich tracts occupy residues 769–805 and 926–938; these read SMAPSQSSGASSVTSKQGHGQPPLLHHPQPSTPLSPL and PISRPSPIKRPSS.

This sequence belongs to the NST1 family.

Its subcellular location is the cytoplasm. Functionally, may act as a negative regulator of salt tolerance. The chain is Stress response protein nst1 (nst1) from Aspergillus niger (strain ATCC MYA-4892 / CBS 513.88 / FGSC A1513).